Consider the following 426-residue polypeptide: D-amino acid dehydrogenase (426 aa).

3 to 17 is an FAD binding site; sequence VVVLGAGVIGVTTAW.

This sequence belongs to the DadA oxidoreductase family. It depends on FAD as a cofactor.

The catalysed reaction is a D-alpha-amino acid + A + H2O = a 2-oxocarboxylate + AH2 + NH4(+). It functions in the pathway amino-acid degradation; D-alanine degradation; NH(3) and pyruvate from D-alanine: step 1/1. Oxidative deamination of D-amino acids. The sequence is that of D-amino acid dehydrogenase from Phenylobacterium zucineum (strain HLK1).